Here is a 629-residue protein sequence, read N- to C-terminus: Chaperone protein HtpG (629 aa).

The segment at 1-343 (MQKQTLSFQA…SSDLPLNVSR (343 aa)) is a; substrate-binding. A b region spans residues 344-558 (ELLQESRAVK…DGDMSTQLAR (215 aa)). Residues 559-629 (MLKQAGQTVP…YVRRVNALLV (71 aa)) are c.

The protein belongs to the heat shock protein 90 family. Homodimer.

Its subcellular location is the cytoplasm. Its function is as follows. Molecular chaperone. Has ATPase activity. This Polaromonas naphthalenivorans (strain CJ2) protein is Chaperone protein HtpG.